Consider the following 157-residue polypeptide: Phosphopantetheine adenylyltransferase (157 aa).

Threonine 10 contacts substrate. ATP is bound by residues threonine 10–phenylalanine 11 and histidine 18. Lysine 42, leucine 74, and arginine 88 together coordinate substrate. ATP is bound by residues glycine 89–arginine 91, glutamate 99, and asparagine 124–serine 130.

The protein belongs to the bacterial CoaD family. In terms of assembly, homohexamer. Requires Mg(2+) as cofactor.

It is found in the cytoplasm. The enzyme catalyses (R)-4'-phosphopantetheine + ATP + H(+) = 3'-dephospho-CoA + diphosphate. Its pathway is cofactor biosynthesis; coenzyme A biosynthesis; CoA from (R)-pantothenate: step 4/5. Its function is as follows. Reversibly transfers an adenylyl group from ATP to 4'-phosphopantetheine, yielding dephospho-CoA (dPCoA) and pyrophosphate. The sequence is that of Phosphopantetheine adenylyltransferase from Helicobacter pylori (strain J99 / ATCC 700824) (Campylobacter pylori J99).